Here is a 382-residue protein sequence, read N- to C-terminus: Flap endonuclease 1 (382 aa).

The N-domain stretch occupies residues 1 to 105; that stretch reads MGIKGLNAII…HELTKRSSRR (105 aa). Asp34 is a binding site for Mg(2+). Residues Arg47 and Arg71 each contribute to the DNA site. Residues Asp87, Glu156, Glu158, Asp177, and Asp179 each contribute to the Mg(2+) site. The interval 120–251 is I-domain; sequence EKMKQERRLV…VTALKLIKTH (132 aa). Glu156 contacts DNA. Gly229 and Asp231 together coordinate DNA. Position 231 (Asp231) interacts with Mg(2+). Positions 339-347 are interaction with PCNA; the sequence is IQGRLDGFF. Residues 358-382 are disordered; sequence AAAAKRAQENKKLNKNKNKVTKGRR. Basic residues predominate over residues 370–382; sequence LNKNKNKVTKGRR.

Belongs to the XPG/RAD2 endonuclease family. FEN1 subfamily. As to quaternary structure, interacts with PCNA. Three molecules of RAD27 bind to one PCNA trimer with each molecule binding to one PCNA monomer. PCNA stimulates the nuclease activity without altering cleavage specificity. Requires Mg(2+) as cofactor. Phosphorylated. Phosphorylation upon DNA damage induces relocalization to the nuclear plasma.

Its subcellular location is the nucleus. The protein resides in the nucleolus. It localises to the nucleoplasm. The protein localises to the mitochondrion. Functionally, structure-specific nuclease with 5'-flap endonuclease and 5'-3' exonuclease activities involved in DNA replication and repair. During DNA replication, cleaves the 5'-overhanging flap structure that is generated by displacement synthesis when DNA polymerase encounters the 5'-end of a downstream Okazaki fragment. It enters the flap from the 5'-end and then tracks to cleave the flap base, leaving a nick for ligation. Also involved in the long patch base excision repair (LP-BER) pathway, by cleaving within the apurinic/apyrimidinic (AP) site-terminated flap. Acts as a genome stabilization factor that prevents flaps from equilibrating into structures that lead to duplications and deletions. Also possesses 5'-3' exonuclease activity on nicked or gapped double-stranded DNA, and exhibits RNase H activity. Also involved in replication and repair of rDNA and in repairing mitochondrial DNA. The polypeptide is Flap endonuclease 1 (Saccharomyces cerevisiae (strain RM11-1a) (Baker's yeast)).